The primary structure comprises 239 residues: NAD(P)H-quinone oxidoreductase subunit K, chloroplastic (239 aa).

[4Fe-4S] cluster is bound by residues Cys43, Cys44, Cys108, and Cys139. The disordered stretch occupies residues 217–239 (KSSVSSRELGNESGKEDVSIQNK). A compositionally biased stretch (basic and acidic residues) spans 225–239 (LGNESGKEDVSIQNK).

The protein belongs to the complex I 20 kDa subunit family. As to quaternary structure, NDH is composed of at least 16 different subunits, 5 of which are encoded in the nucleus. [4Fe-4S] cluster serves as cofactor.

It localises to the plastid. It is found in the chloroplast thylakoid membrane. It carries out the reaction a plastoquinone + NADH + (n+1) H(+)(in) = a plastoquinol + NAD(+) + n H(+)(out). It catalyses the reaction a plastoquinone + NADPH + (n+1) H(+)(in) = a plastoquinol + NADP(+) + n H(+)(out). NDH shuttles electrons from NAD(P)H:plastoquinone, via FMN and iron-sulfur (Fe-S) centers, to quinones in the photosynthetic chain and possibly in a chloroplast respiratory chain. The immediate electron acceptor for the enzyme in this species is believed to be plastoquinone. Couples the redox reaction to proton translocation, and thus conserves the redox energy in a proton gradient. The sequence is that of NAD(P)H-quinone oxidoreductase subunit K, chloroplastic from Acorus calamus var. americanus (American sweet flag).